A 563-amino-acid polypeptide reads, in one-letter code: Autotransporter BimA (563 aa).

Residues 1–20 form a disordered region; the sequence is MKYRRLSLAHARQDSGQAAS. A signal peptide spans 1 to 48; it reads MKYRRLSLAHARQDSGQAASNARSRRFARLLCSSIAPLALGFSADAFA. Positions 61–472 are surface exposed passenger domain; sequence APNDAHGNLL…NLAISNSNAY (412 aa). The 18-residue stretch at 65 to 82 folds into the WH2 domain; it reads AHGNLLDEIRRGVPLRHV. The tract at residues 96–130 is central and acidic domains; sequence TLADAMRRVIDSRRTAFDSPPATPASPSPSWSDDE. The disordered stretch occupies residues 109–350; it reads RTAFDSPPAT…PARPGGGQFT (242 aa). Low complexity-rich tracts occupy residues 138–150, 162–197, and 211–227; these read ATRP…SAAR, PASA…STPR, and SPAA…AHSR. Composition is skewed to polar residues over residues 228–238 and 269–281; these read GSTQPPSNLST and SRGS…NLST. Residues 473–509 are outer membrane translocation of the passenger domain; that stretch reads TNQRIGDLQQSITETARDAYSGVAAATALTMIPDVDR. Transmembrane regions (beta stranded) follow at residues 510 to 519, 525 to 536, 543 to 549, and 553 to 563; these read DKMLSIGVGG, HRAVALGGTARI, RAGVAMS, and NTVGVGMSWQW. The interval 510 to 563 is translocator domain; the sequence is DKMLSIGVGGAVYKGHRAVALGGTARIGENLKVRAGVAMSAGGNTVGVGMSWQW.

This sequence belongs to the autotransporter-2 (AT-2) (TC 1.B.40) family. As to quaternary structure, homotrimer. Interacts with host G-actin; the interaction is direct. Interacts (via central and acidic domains) with host ACTR2/ARP2 and ACTR3/ARP3.

The protein localises to the cell outer membrane. It is found in the cell surface. In terms of biological role, during host cell infection, required for actin-based intracellular motility. Mediates actin tail formation at one pole of the bacteria surface by recruiting host Arp2/3 (ACTR3/ARP3-ACTR2/ARP2) which leads to actin polymerization which provides the propulsive force for intracellular movement and intercellular dissemination of the bacterium. The sequence is that of Autotransporter BimA from Burkholderia thailandensis (strain ATCC 700388 / DSM 13276 / CCUG 48851 / CIP 106301 / E264).